The following is an 85-amino-acid chain: ATP synthase subunit c (85 aa).

2 consecutive transmembrane segments (helical) span residues 10–30 and 53–73; these read IAVSIMIGLAALGTALGFGIL and FIVAGLIDAIAMIGVAVALLF.

It belongs to the ATPase C chain family. In terms of assembly, F-type ATPases have 2 components, F(1) - the catalytic core - and F(0) - the membrane proton channel. F(1) has five subunits: alpha(3), beta(3), gamma(1), delta(1), epsilon(1). F(0) has three main subunits: a(1), b(2) and c(10-14). The alpha and beta chains form an alternating ring which encloses part of the gamma chain. F(1) is attached to F(0) by a central stalk formed by the gamma and epsilon chains, while a peripheral stalk is formed by the delta and b chains.

The protein localises to the cell inner membrane. Its function is as follows. F(1)F(0) ATP synthase produces ATP from ADP in the presence of a proton or sodium gradient. F-type ATPases consist of two structural domains, F(1) containing the extramembraneous catalytic core and F(0) containing the membrane proton channel, linked together by a central stalk and a peripheral stalk. During catalysis, ATP synthesis in the catalytic domain of F(1) is coupled via a rotary mechanism of the central stalk subunits to proton translocation. In terms of biological role, key component of the F(0) channel; it plays a direct role in translocation across the membrane. A homomeric c-ring of between 10-14 subunits forms the central stalk rotor element with the F(1) delta and epsilon subunits. This is ATP synthase subunit c from Idiomarina loihiensis (strain ATCC BAA-735 / DSM 15497 / L2-TR).